The chain runs to 722 residues: Pesticidal crystal protein Cry22Aa (722 aa).

Its function is as follows. Promotes colloidosmotic lysis by binding to the midgut epithelial cells of hymenopteran species. In Bacillus thuringiensis, this protein is Pesticidal crystal protein Cry22Aa (cry22Aa).